The following is a 203-amino-acid chain: 22.3 kDa class VI heat shock protein (203 aa).

Positions 86–203 constitute a sHSP domain; sequence ALRRGARTTV…DAHQAAAATA (118 aa).

It belongs to the small heat shock protein (HSP20) family. In terms of assembly, may form oligomeric structures.

It localises to the cytoplasm. The sequence is that of 22.3 kDa class VI heat shock protein (HSP22.3) from Oryza sativa subsp. japonica (Rice).